The chain runs to 152 residues: Large ribosomal subunit protein uL15 (152 aa).

A disordered region spans residues 18–37; that stretch reads RVARGIGSGKGKTAGRGVKG. The segment covering 23–35 has biased composition (gly residues); that stretch reads IGSGKGKTAGRGV.

The protein belongs to the universal ribosomal protein uL15 family. Part of the 50S ribosomal subunit.

In terms of biological role, binds to the 23S rRNA. The chain is Large ribosomal subunit protein uL15 from Rickettsia bellii (strain OSU 85-389).